The sequence spans 352 residues: MIRKAIARVVERQDLSEAEMIEVMDQVMSGGATPAQIASFITALRMKGETVDEITGAARVMRDRALPIRVGKSVLGIDRDDINLDRETILDTCGTGGSGTNSFNISTTVAFIVSACGVKVAKHGNRAVSSSCGSADVLEALGVNLDVTPDVVERSIAQIGIGFLFAPALHGAMKHAIGPRREIGIRTIFNILGPLTNPAGADCQVLGVYREDLVEKLAQVLKKLGCRSGFVVHGCDGMDEITLTGESTVAEITADGVKLYKVTPEQFGLERAPLAELHGGDALGNAVIVRDILSGKDGAKRRIVLLNAGYALVATGKAKDVAEGIRLAAETIDSGAAMKQLERLVALTNEAE.

Residues glycine 94, 97-98 (GS), serine 102, 104-107 (NIST), 122-130 (KHGNRAVSS), and serine 134 each bind 5-phospho-alpha-D-ribose 1-diphosphate. Glycine 94 is a binding site for anthranilate. Serine 106 is a binding site for Mg(2+). Asparagine 125 serves as a coordination point for anthranilate. Arginine 180 is an anthranilate binding site. Mg(2+) contacts are provided by aspartate 239 and glutamate 240.

Belongs to the anthranilate phosphoribosyltransferase family. As to quaternary structure, homodimer. Requires Mg(2+) as cofactor.

The enzyme catalyses N-(5-phospho-beta-D-ribosyl)anthranilate + diphosphate = 5-phospho-alpha-D-ribose 1-diphosphate + anthranilate. It participates in amino-acid biosynthesis; L-tryptophan biosynthesis; L-tryptophan from chorismate: step 2/5. Catalyzes the transfer of the phosphoribosyl group of 5-phosphorylribose-1-pyrophosphate (PRPP) to anthranilate to yield N-(5'-phosphoribosyl)-anthranilate (PRA). This chain is Anthranilate phosphoribosyltransferase, found in Citrifermentans bemidjiense (strain ATCC BAA-1014 / DSM 16622 / JCM 12645 / Bem) (Geobacter bemidjiensis).